A 606-amino-acid polypeptide reads, in one-letter code: DNA mismatch repair protein MutL (606 aa).

The tract at residues 350 to 371 is disordered; the sequence is GWRPSAPSAPWTPEASPSRPYQ.

Belongs to the DNA mismatch repair MutL/HexB family.

This protein is involved in the repair of mismatches in DNA. It is required for dam-dependent methyl-directed DNA mismatch repair. May act as a 'molecular matchmaker', a protein that promotes the formation of a stable complex between two or more DNA-binding proteins in an ATP-dependent manner without itself being part of a final effector complex. The protein is DNA mismatch repair protein MutL of Rhizobium rhizogenes (strain K84 / ATCC BAA-868) (Agrobacterium radiobacter).